Consider the following 98-residue polypeptide: Prostate and testis expressed protein 3 (98 aa).

The first 20 residues, 1–20 (MNKHFLLLFSLFYFIVEATS), serve as a signal peptide directing secretion. Positions 21–97 (LKCVTCHLRT…CCNSDFCNFR (77 aa)) constitute a UPAR/Ly6 domain. 4 cysteine pairs are disulfide-bonded: Cys23–Cys50, Cys26–Cys35, Cys42–Cys68, and Cys72–Cys88.

This sequence belongs to the PATE family.

The protein localises to the secreted. The polypeptide is Prostate and testis expressed protein 3 (Pate3) (Mus musculus (Mouse)).